A 358-amino-acid chain; its full sequence is MSLDRFLKNAISPWMKKDGSDADIVLSSRIRLARNMSAFTFPMLSSKEEAYAVAKHVKDALGGTQGEALGKAEMLAMEDMRTNDKRMLVEKHLISPHLAEQSKYGMVLLSGDESLSIMINEEDHIRIQSLSAGFELENCLQAANAVDDWVESHLTYAYDSQYGYLTSCPTNVGTGMRASVMIHLPALAMTRQLQRILPAINQLGLVVRGIYGEGSEALGNLFQISNQITLGKTEQDIVDDLQGVVKQLIRQERVARDSLLQHSKLELKDRVFRSYGILANSYIIDSKEATRRLSDVRLGIDLGFIENTAGKILDELMILTQPGFLQQYAKTVLTPEQRDERRAALIRERLKLEHETAD.

In terms of domain architecture, Phosphagen kinase C-terminal spans 24 to 255 (IVLSSRIRLA…KQLIRQERVA (232 aa)). Residues 27 to 31 (SSRIR), His92, Arg126, 177 to 181 (RASVM), and 208 to 213 (RGIYGE) each bind ATP. An RDXXRA motif of the pArg binding pocket involved in allosteric regulation motif is present at residues 338–343 (RDERRA).

It belongs to the ATP:guanido phosphotransferase family.

It carries out the reaction L-arginyl-[protein] + ATP = N(omega)-phospho-L-arginyl-[protein] + ADP + H(+). With respect to regulation, appears to be allosterically activated by the binding of pArg-containing polypeptides to the pArg-binding pocket localized in the C-terminal domain of McsB. In terms of biological role, catalyzes the specific phosphorylation of arginine residues in a large number of proteins. Is part of the bacterial stress response system. Protein arginine phosphorylation has a physiologically important role and is involved in the regulation of many critical cellular processes, such as protein homeostasis, motility, competence, and stringent and stress responses, by regulating gene expression and protein activity. This chain is Protein-arginine kinase, found in Shouchella clausii (strain KSM-K16) (Alkalihalobacillus clausii).